The sequence spans 553 residues: Methyl-coenzyme M reductase I subunit alpha (553 aa).

Q150 contributes to the coenzyme F430 binding site. Coenzyme B is bound by residues R228, 259–260 (KH), and R273. R274 carries the post-translational modification 5-methylarginine. Y335 and Y447 together coordinate coenzyme M.

This sequence belongs to the methyl-coenzyme M reductase alpha subunit family. In terms of assembly, MCR is a hexamer of two alpha, two beta, and two gamma chains, forming a dimer of heterotrimers. Coenzyme F430 serves as cofactor. In terms of processing, is methylated on C5 of Arg-274 by the methyltransferase MJ0841. This post-translational methylation, despite being not essential in vivo, plays a role for the stability and structural integrity of MCR.

The protein resides in the cytoplasm. The enzyme catalyses coenzyme B + methyl-coenzyme M = methane + coenzyme M-coenzyme B heterodisulfide. The protein operates within one-carbon metabolism; methyl-coenzyme M reduction; methane from methyl-coenzyme M: step 1/1. Its function is as follows. Component of the methyl-coenzyme M reductase (MCR) I that catalyzes the reductive cleavage of methyl-coenzyme M (CoM-S-CH3 or 2-(methylthio)ethanesulfonate) using coenzyme B (CoB or 7-mercaptoheptanoylthreonine phosphate) as reductant which results in the production of methane and the mixed heterodisulfide of CoB and CoM (CoM-S-S-CoB). This is the final step in methanogenesis. This is Methyl-coenzyme M reductase I subunit alpha (mcrA) from Methanocaldococcus jannaschii (strain ATCC 43067 / DSM 2661 / JAL-1 / JCM 10045 / NBRC 100440) (Methanococcus jannaschii).